The chain runs to 754 residues: Phosphoribosylformylglycinamidine synthase subunit PurL (754 aa).

His-52 is a catalytic residue. 2 residues coordinate ATP: Tyr-55 and Lys-95. Mg(2+) is bound at residue Glu-97. Residues Ser-98–His-101 and Arg-120 contribute to the substrate site. Residue His-99 is the Proton acceptor of the active site. Asp-121 is a Mg(2+) binding site. A substrate-binding site is contributed by Gln-244. Mg(2+) is bound at residue Asp-272. Position 316 to 318 (Glu-316 to Gln-318) interacts with substrate. Positions 504 and 541 each coordinate ATP. Asn-542 contributes to the Mg(2+) binding site. Ser-544 lines the substrate pocket.

This sequence belongs to the FGAMS family. In terms of assembly, monomer. Part of the FGAM synthase complex composed of 1 PurL, 1 PurQ and 2 PurS subunits.

The protein resides in the cytoplasm. It carries out the reaction N(2)-formyl-N(1)-(5-phospho-beta-D-ribosyl)glycinamide + L-glutamine + ATP + H2O = 2-formamido-N(1)-(5-O-phospho-beta-D-ribosyl)acetamidine + L-glutamate + ADP + phosphate + H(+). Its pathway is purine metabolism; IMP biosynthesis via de novo pathway; 5-amino-1-(5-phospho-D-ribosyl)imidazole from N(2)-formyl-N(1)-(5-phospho-D-ribosyl)glycinamide: step 1/2. Functionally, part of the phosphoribosylformylglycinamidine synthase complex involved in the purines biosynthetic pathway. Catalyzes the ATP-dependent conversion of formylglycinamide ribonucleotide (FGAR) and glutamine to yield formylglycinamidine ribonucleotide (FGAM) and glutamate. The FGAM synthase complex is composed of three subunits. PurQ produces an ammonia molecule by converting glutamine to glutamate. PurL transfers the ammonia molecule to FGAR to form FGAM in an ATP-dependent manner. PurS interacts with PurQ and PurL and is thought to assist in the transfer of the ammonia molecule from PurQ to PurL. The protein is Phosphoribosylformylglycinamidine synthase subunit PurL of Salinibacter ruber (strain DSM 13855 / M31).